The chain runs to 180 residues: Major urinary protein 5 (180 aa).

The first 18 residues, 1 to 18 (MKLLLLLCLELTLVYVHA), serve as a signal peptide directing secretion. The cysteines at positions 82 and 175 are disulfide-linked.

This sequence belongs to the calycin superfamily. Lipocalin family.

The protein resides in the secreted. Its function is as follows. Major urinary proteins (Mups) bind pheromones, and thus stabilize them to allow slow release into the air from urine marks. May protect pheromones from oxidation. May also act as pheromones themselves. In this context, they play a role in the regulation of social behaviors, such as aggression, mating, pup-suckling, territory establishment and dominance. The protein is Major urinary protein 5 of Mus musculus (Mouse).